Reading from the N-terminus, the 180-residue chain is N-terminal acetyltransferase B complex catalytic subunit naa20 (180 aa).

An N-acetyltransferase domain is found at 2 to 156 (TDTRKFKATD…DSFDMRKPLS (155 aa)).

It belongs to the acetyltransferase family. Component of the N-terminal acetyltransferase B (NatB) complex.

It is found in the cytoplasm. It localises to the nucleus. The enzyme catalyses N-terminal L-methionyl-L-asparaginyl-[protein] + acetyl-CoA = N-terminal N(alpha)-acetyl-L-methionyl-L-asparaginyl-[protein] + CoA + H(+). The catalysed reaction is N-terminal L-methionyl-L-glutaminyl-[protein] + acetyl-CoA = N-terminal N(alpha)-acetyl-L-methionyl-L-glutaminyl-[protein] + CoA + H(+). It catalyses the reaction N-terminal L-methionyl-L-aspartyl-[protein] + acetyl-CoA = N-terminal N(alpha)-acetyl-L-methionyl-L-aspartyl-[protein] + CoA + H(+). It carries out the reaction N-terminal L-methionyl-L-glutamyl-[protein] + acetyl-CoA = N-terminal N(alpha)-acetyl-L-methionyl-L-glutamyl-[protein] + CoA + H(+). Functionally, catalytic subunit of the NatB N-terminal acetyltransferase, which catalyzes acetylation of the amino-terminal methionine residues of all proteins beginning with Met-Asp or Met-Glu and of some proteins beginning with Met-Asn, Met-Gln or Met-Met. The sequence is that of N-terminal acetyltransferase B complex catalytic subunit naa20 (naa20) from Schizosaccharomyces pombe (strain 972 / ATCC 24843) (Fission yeast).